We begin with the raw amino-acid sequence, 188 residues long: MSIKSDKWIRRMAESTGMIEPFEPGQIREADGKKIISYGTSSYGYDIRCAPEFKVFTNIHSTVVDPKNFDEKSFVDFHGDSCIIPPNSFALARTLEYFRIPRNVLTICLGKSTYARCGIIVNVTPFEPEWEGYVTLEFSNTTPLPAKIYAGEGCAQVLFFESDEVCETSYKDRGGKYQGQQGVTLPKA.

DCTP is bound by residues 111–116, 135–137, Q156, Y170, and Q180; these read KSTYAR and TLE. The active-site Proton donor/acceptor is E137.

It belongs to the dCTP deaminase family. Homotrimer.

It catalyses the reaction dCTP + H2O + H(+) = dUTP + NH4(+). Its pathway is pyrimidine metabolism; dUMP biosynthesis; dUMP from dCTP (dUTP route): step 1/2. In terms of biological role, catalyzes the deamination of dCTP to dUTP. This is dCTP deaminase from Polaromonas sp. (strain JS666 / ATCC BAA-500).